Reading from the N-terminus, the 369-residue chain is 5-amino-6-(D-ribitylamino)uracil--L-tyrosine 4-hydroxyphenyl transferase (369 aa).

Positions 56–292 (VTFVVNRNIN…AVARLYFGPL (237 aa)) constitute a Radical SAM core domain. Residues Cys70, Cys74, and Cys77 each coordinate [4Fe-4S] cluster.

Belongs to the radical SAM superfamily. CofH family. In terms of assembly, consists of two subunits, CofG and CofH. Requires [4Fe-4S] cluster as cofactor.

It catalyses the reaction 5-amino-6-(D-ribitylamino)uracil + L-tyrosine + S-adenosyl-L-methionine = 5-amino-5-(4-hydroxybenzyl)-6-(D-ribitylimino)-5,6-dihydrouracil + 2-iminoacetate + 5'-deoxyadenosine + L-methionine + H(+). Its pathway is cofactor biosynthesis; coenzyme F0 biosynthesis. Catalyzes the radical-mediated synthesis of 5-amino-5-(4-hydroxybenzyl)-6-(D-ribitylimino)-5,6-dihydrouracil from 5-amino-6-(D-ribitylamino)uracil and L-tyrosine. This chain is 5-amino-6-(D-ribitylamino)uracil--L-tyrosine 4-hydroxyphenyl transferase, found in Methanopyrus kandleri (strain AV19 / DSM 6324 / JCM 9639 / NBRC 100938).